The primary structure comprises 181 residues: SRP-independent targeting protein 2 (181 aa).

The Cytoplasmic portion of the chain corresponds to Met-1 to Lys-15. A helical membrane pass occupies residues Ile-16 to Phe-36. At Ile-37 to Gln-45 the chain is on the lumenal side. The chain crosses the membrane as a helical span at residues Trp-46–Ser-66. At Gly-67 to Leu-89 the chain is on the cytoplasmic side. Residues Ile-90–Phe-110 traverse the membrane as a helical segment. The Lumenal segment spans residues Arg-111–Thr-112. The chain crosses the membrane as a helical span at residues Phe-113–Leu-133. The Cytoplasmic portion of the chain corresponds to Lys-134–Arg-181. Residues Thr-144–Gln-157 are compositionally biased toward polar residues. The interval Thr-144–Arg-181 is disordered. Residues Arg-168 to Arg-181 show a composition bias toward basic and acidic residues.

Belongs to the TMEM208 family. As to quaternary structure, interacts with SND1, PHO88/SND3 and the translocon complex subunit SEC61. ENV10/SND2 and PHO88/SND3 form a complex with the translocon in the endoplasmic reticulum membrane.

It is found in the endoplasmic reticulum membrane. Functions in the SND pathway, a SRP (signal recognition particle) and GET (guided entry of tail-anchored proteins) independent pathway for targeting a broad range of substrate proteins to the endoplasmic reticulum. SND functions in parallel to GET in targeting proteins with downstream hydrophobic motifs. Involved in vacuolar processing and morphology. The protein is SRP-independent targeting protein 2 of Saccharomyces cerevisiae (strain ATCC 204508 / S288c) (Baker's yeast).